A 381-amino-acid chain; its full sequence is L-lactate dehydrogenase (381 aa).

One can recognise an FMN hydroxy acid dehydrogenase domain in the interval 1–380 (MIISASTDYR…TRDSLVRELG (380 aa)). Position 24 (Tyr-24) interacts with substrate. FMN-binding residues include Ser-106 and Gln-127. Tyr-129 contacts substrate. An FMN-binding site is contributed by Thr-155. Arg-164 provides a ligand contact to substrate. Lys-251 contributes to the FMN binding site. His-275 functions as the Proton acceptor in the catalytic mechanism. Arg-278 contributes to the substrate binding site. Position 306–330 (306–330 (DSGIRSGLDVVRMIALGADTVLIGR)) interacts with FMN.

The protein belongs to the FMN-dependent alpha-hydroxy acid dehydrogenase family. As to quaternary structure, homotetramer. Requires FMN as cofactor.

It is found in the cell inner membrane. The catalysed reaction is (S)-lactate + A = pyruvate + AH2. In terms of biological role, catalyzes the conversion of L-lactate to pyruvate. Is coupled to the respiratory chain. The chain is L-lactate dehydrogenase from Pseudomonas putida (strain ATCC 700007 / DSM 6899 / JCM 31910 / BCRC 17059 / LMG 24140 / F1).